Consider the following 292-residue polypeptide: Medium chain reductase/dehydrogenase ucsI (292 aa).

C43 contributes to the Zn(2+) binding site. A substrate-binding site is contributed by Y49. Zn(2+) contacts are provided by H65 and E66. Residues 184–189, D208, R213, and 276–278 each bind NAD(+); these read GCGPVG and IGA.

It belongs to the zinc-containing alcohol dehydrogenase family. It depends on Zn(2+) as a cofactor.

The protein operates within mycotoxin biosynthesis. Its function is as follows. Medium chain reductase/dehydrogenase; part of the gene cluster that mediates the biosynthesis of UCS1025A, a member of the pyrrolizidinone family that acts as a strong telomerase inhibitor and displays potent antibacterial and antitumor properties. These compounds share a hemiaminal-containing pyrrolizidinone core fused with a gamma-lactone, giving a furopyrrolizidine that is connected to a decalin fragment. The polyketide synthase module (PKS) of the PKS-NRPS ucsA is responsible for the synthesis of the polyketide backbone via the condensation of an acetyl-CoA starter unit with 6 malonyl-CoA units. The downstream nonribosomal peptide synthetase (NRPS) module then amidates the carboxyl end of the polyketide with a 2S,3S-methylproline derived from L-isoleucine by the 2-oxoglutarate-dependent dioxygenase ucsF which converts L-isoleucine to (4S,5S)-4-methylpyrroline-5-carboxylate that is further converted to 2S,3S-methylproline by the pyrroline-5-carboxylate reductase ucsG. Reductive release of the completed aminoacyl polyketide from the assembly line can form the 3-pyrrolin-2-one structure via an intramolecular Knoevenagel reaction. Because ucsA lacks a designated enoylreductase (ER) domain, the required activity is provided the enoyl reductase ucsL. This keto acyclic precursor is the substrate of the Diels-Alderase ucsH, that catalyzes the Diels-Alder cycloaddition. Oxidation of the 3S-methyl group to a carboxylate by the cytochrome P450 monooxygenase ucsK allows an oxa-Michael cyclization that might involve the reductase/dehydrogenase ucsI and which furnishes the furopyrrolizidine. The oxidase ucsJ likely plays a critical role in stereoselective reduction of the C5-C6 double bond to afford the required R-configured carboxylate group. Further enolization and oxidation at C5 by an unidentified enzyme affords the last intermediate that can undergo oxa-Michael cyclization to yield UCS1025A. The sequence is that of Medium chain reductase/dehydrogenase ucsI from Acremonium sp.